Consider the following 444-residue polypeptide: Methylenetetrahydrofolate--tRNA-(uracil-5-)-methyltransferase TrmFO (444 aa).

An FAD-binding site is contributed by 10 to 15 (GAGLAG).

Belongs to the MnmG family. TrmFO subfamily. The cofactor is FAD.

The protein resides in the cytoplasm. It carries out the reaction uridine(54) in tRNA + (6R)-5,10-methylene-5,6,7,8-tetrahydrofolate + NADH + H(+) = 5-methyluridine(54) in tRNA + (6S)-5,6,7,8-tetrahydrofolate + NAD(+). The enzyme catalyses uridine(54) in tRNA + (6R)-5,10-methylene-5,6,7,8-tetrahydrofolate + NADPH + H(+) = 5-methyluridine(54) in tRNA + (6S)-5,6,7,8-tetrahydrofolate + NADP(+). In terms of biological role, catalyzes the folate-dependent formation of 5-methyl-uridine at position 54 (M-5-U54) in all tRNAs. The polypeptide is Methylenetetrahydrofolate--tRNA-(uracil-5-)-methyltransferase TrmFO (Streptococcus pneumoniae (strain Taiwan19F-14)).